Consider the following 514-residue polypeptide: Ubiquitin carboxyl-terminal hydrolase 22 (514 aa).

Residues 10–127 form a UBP-type zinc finger; that stretch reads PGCAHLGSFK…KEEQRKAWKM (118 aa). Positions 12, 14, 52, 55, 65, 68, 73, 78, 82, 88, 101, and 104 each coordinate Zn(2+). Lys-118 carries the N6-acetyllysine modification. The residue at position 136 (Thr-136) is a Phosphothreonine. Residues 165–509 enclose the USP domain; sequence RGLINLGNTC…EGYLLFYHKQ (345 aa). Cys-174 (nucleophile) is an active-site residue. Ser-226 bears the Phosphoserine mark. His-468 serves as the catalytic Proton acceptor.

The protein belongs to the peptidase C19 family. UBP8 subfamily. In terms of assembly, component of some SAGA transcription coactivator-HAT complexes, at least composed of ATXN7, ATXN7L3, ENY2, GCN5L2, SUPT3H, TAF10, TRRAP and USP22. Within the SAGA complex, ATXN7L3, ENY2 and USP22 form a subcomplex required for histone deubiquitination. Interacts directly with ATXN7L3; leading to its recruitment to the SAGA complex. Interacts with ATXN7L3 and weakly with ATXN7L3B. Interacts with MED1. Phosphorylated in G2/M phase, but not in G1 phase by CDK1. Post-translationally, ubiquitinated and subsequently degraded in a CDC20-dependent manner.

It localises to the nucleus. Its subcellular location is the cytoplasm. The enzyme catalyses Thiol-dependent hydrolysis of ester, thioester, amide, peptide and isopeptide bonds formed by the C-terminal Gly of ubiquitin (a 76-residue protein attached to proteins as an intracellular targeting signal).. Functionally, deubiquitinase that plays a role in several cellular processes including transcriptional regulation, cell cycle progression or innate immunity. As part of the transcription regulatory histone acetylation (HAT) complex SAGA, catalyzes the deubiquitination of both histones H2A and H2B, thereby acting as a transcriptional coactivator. Recruited to specific gene promoters by activators such as MYC, where it is required for transcription. Facilitates cell-cycle progression by stabilizing CCNB1 and antagonizing its proteasome-mediated degradation in a cell cycle-specific manner. Modulates cell cycle progression and apoptosis also by antagonizing TP53 transcriptional activation through deacetylase SIRT1 stabilization. Plays multiple roles in immunity and inflammation. Participates in antiviral response by deubiquitinating the importin KPNA2, leading to IRF3 nuclear translocation and subsequent type I interferon production. Acts as a central regulator of type III IFN signaling by negatively regulating STING1 activation and ubiquitination. Inhibits NLRP3 inflammasome activation by promoting NLRP3 degradation through ATG5-dependent autophagy. Deubiquitinates CD274 to induce its stabilization and thereby participates in maintenance of immune tolerance to self. Controls necroptotic cell death by regulating RIPK3 phosphorylation and ubiquitination. During bacterial infection, promotes pro-inflammatory response by targeting TRAF6 and removing its 'Lys-48'-linked polyubiquitination. This chain is Ubiquitin carboxyl-terminal hydrolase 22 (USP22), found in Bos taurus (Bovine).